A 741-amino-acid polypeptide reads, in one-letter code: Nuclear poly(A) polymerase 4 (741 aa).

Residues 101-103 (FGS), 113-116 (ADID), 114-116 (DID), D169, K230, Y239, and 248-249 (GV) each bind ATP. D114, D116, and D169 together coordinate Mg(2+). A Nuclear localization signal motif is present at residues 485 to 492 (RRRQLPPF). Disordered stretches follow at residues 494-556 (FPNG…LSPQ) and 683-741 (YEGF…RLLT). Residues 534–551 (KNDSEMMDVRPEKPEKRA) show a composition bias toward basic and acidic residues. Residues 701 to 717 (LYSQSGMSEDLQSNSLV) are compositionally biased toward polar residues. Over residues 721 to 731 (EKSEDRARSES) the composition is skewed to basic and acidic residues. The segment covering 732-741 (FQKSQIRLLT) has biased composition (polar residues).

Belongs to the poly(A) polymerase family. As to quaternary structure, monomer. Forms a complex with cleavage and polyadenylation specificity factor (CPSF) subunits CFIS2, FIPS3, PAPS1, PABN1, PABN2, PABN3 and FIPS5. Requires Mg(2+) as cofactor. Mn(2+) is required as a cofactor. In terms of tissue distribution, mostly expressed in flowers (very active in pollen, sepals, styles, and stigmas), cotyledons and hypocotyls, and, to a lower extent, in roots (confined to the vascular tissue in the radicle) and leaves (in the vascular tissue and leaf petioles). Barely detected in stems. Active in the primary and secondary root systems.

Its subcellular location is the nucleus. The catalysed reaction is RNA(n) + ATP = RNA(n)-3'-adenine ribonucleotide + diphosphate. Functionally, essential protein. Polymerase that creates the 3'-poly(A) tail of mRNA's. Also required for the endoribonucleolytic cleavage reaction at some polyadenylation sites. May acquire specificity through interaction with a cleavage and polyadenylation specificity factor (CPSF) at its C-terminus. In Arabidopsis thaliana (Mouse-ear cress), this protein is Nuclear poly(A) polymerase 4.